Consider the following 1212-residue polypeptide: DNA-directed RNA polymerase subunit beta' (1212 aa).

Zn(2+) is bound by residues Cys60, Cys62, Cys75, and Cys78. Mg(2+)-binding residues include Asp450, Asp452, and Asp454. The Zn(2+) site is built by Cys819, Cys893, Cys900, and Cys903.

It belongs to the RNA polymerase beta' chain family. As to quaternary structure, the RNAP catalytic core consists of 2 alpha, 1 beta, 1 beta' and 1 omega subunit. When a sigma factor is associated with the core the holoenzyme is formed, which can initiate transcription. It depends on Mg(2+) as a cofactor. The cofactor is Zn(2+).

The enzyme catalyses RNA(n) + a ribonucleoside 5'-triphosphate = RNA(n+1) + diphosphate. Its function is as follows. DNA-dependent RNA polymerase catalyzes the transcription of DNA into RNA using the four ribonucleoside triphosphates as substrates. The polypeptide is DNA-directed RNA polymerase subunit beta' (Streptococcus uberis (strain ATCC BAA-854 / 0140J)).